A 562-amino-acid polypeptide reads, in one-letter code: Urocanate hydratase (562 aa).

NAD(+)-binding positions include 52–53 (GG), Gln130, 176–178 (GMG), Glu196, Arg201, 242–243 (NA), 263–267 (QTSAH), 273–274 (YL), and Tyr322. The active site involves Cys410. Gly492 contacts NAD(+).

The protein belongs to the urocanase family. The cofactor is NAD(+).

It is found in the cytoplasm. The catalysed reaction is 4-imidazolone-5-propanoate = trans-urocanate + H2O. It functions in the pathway amino-acid degradation; L-histidine degradation into L-glutamate; N-formimidoyl-L-glutamate from L-histidine: step 2/3. Catalyzes the conversion of urocanate to 4-imidazolone-5-propionate. The polypeptide is Urocanate hydratase (Klebsiella pneumoniae subsp. pneumoniae (strain ATCC 700721 / MGH 78578)).